We begin with the raw amino-acid sequence, 776 residues long: Angiomotin-like protein 2 (776 aa).

Residues 41 to 88 form a disordered region; sequence GGAGAGGTGSPQASAEILAPEDTQVLQQATRQEPQGQEHQGGESHLAE. The segment at 101–307 is required for interaction with CDH5; sequence GEELPTYEEA…STQTSSAPSG (207 aa). Tyr-107 bears the Phosphotyrosine mark. Disordered stretches follow at residues 119-142, 169-215, and 283-309; these read AQQA…GHRS, RNGA…QYPH, and GPLG…SGSA. The segment covering 177-192 has biased composition (polar residues); sequence HMSSSHSFPQLARNQQ. Residues 196-213 show a composition bias toward pro residues; that stretch reads PRGPPAEGPEPRGPPPQY. The segment at 220–307 is required for interaction with CDH1; the sequence is HETATAVTDP…STQTSSAPSG (88 aa). Over residues 297-306 the composition is skewed to polar residues; that stretch reads ASTQTSSAPS. Coiled coils occupy residues 314–509 and 543–570; these read METL…LELR and ALRL…WEQK. Residues Lys-347 and Lys-408 each participate in a glycyl lysine isopeptide (Lys-Gly) (interchain with G-Cter in ubiquitin) cross-link. Disordered stretches follow at residues 591 to 620 and 677 to 743; these read QRDT…GHRH and TQGW…LDPD. The segment covering 678–687 has biased composition (polar residues); sequence QGWQSLSSSE. Residues Ser-756 and Ser-759 each carry the phosphoserine modification. A PDZ-binding motif is present at residues 773 to 776; it reads EILI.

This sequence belongs to the angiomotin family. As to quaternary structure, part of a complex composed of AMOTL2, MAGI1 and CDH5, within the complex AMOTL2 acts as a scaffold protein for the interaction of MAGI1 with CDH5. The complex is required for coupling actin fibers to cell junctions in endothelial cells. Within the complex AMOTL2 (via its N-terminus) interacts with CDH5. Interacts (via N-terminus) with MAGI1. Interacts (via N-terminus) with ACTB; the interaction facilitates binding of cell junction complexes to actin fibers in endothelial cells. Interacts with CDH1; the interaction may facilitate binding of radial actin fibers to cell junction complexes. Interacts with SRC. Interacts with YAP1; the interaction is required for ubiquitination of AMOTL2 and localization of YAP1 to tight junctions. Interacts with WWP1; the interaction facilitates WWP1 interaction with the Crumbs complex and subsequent WWP1 translocation to the plasma membrane. WPP1 interaction with the Crumbs complex promotes WPP1 monoubiquitination of AMOTL2 which subsequently activates the Hippo signaling pathway. When ubiquitinated interacts with LATS2 (via UBA domain); the interaction promotes LATS2 phosphorylation of YAP1. Interacts (via PPXY motif) with WWTR1/TAZ (via WW domain); the interaction promotes WWTR1/TAZ localization to the cytoplasm and thereby inhibition of its transcriptional properties. Interacts with PHLDB2; interaction may facilitate PHLDB2 localization to the myotube podosome cortex that surrounds the core. Post-translationally, monoubiquitinated at Lys-347 and Lys-408 by Crumbs complex-bound WWP1. De-ubiquitinated at Lys-347 and Lys-408 by USP9X; the interaction may be promoted by cell contact inhibition. Deubiquitination of AMOTL2 negatively regulates Hippo signaling activation. Phosphorylation at Tyr-107 is necessary for efficient binding to SRC and synergistically functioning with SRC to activate the downstream MAPK pathway.

It localises to the recycling endosome. The protein resides in the cytoplasm. It is found in the cell projection. Its subcellular location is the podosome. The protein localises to the cell junction. Its function is as follows. Regulates the translocation of phosphorylated SRC to peripheral cell-matrix adhesion sites. Required for proper architecture of actin filaments. Plays a role in coupling actin fibers to cell junctions in endothelial cells and is therefore required for correct endothelial cell morphology via facilitating transcellular transmission of mechanical force resulting in endothelial cell elongation. Required for the anchoring of radial actin fibers to CDH1 junction complexes at the cell membrane which facilitates organization of radial actin fiber structure and cellular response to contractile forces. This contributes to maintenance of cell area, size, shape, epithelial sheet organization and trophectoderm cell properties that facilitate blastocyst zona hatching. Inhibits the Wnt/beta-catenin signaling pathway, probably by recruiting CTNNB1 to recycling endosomes and hence preventing its translocation to the nucleus. Participates in angiogenesis. Activates the Hippo signaling pathway in response to cell contact inhibition via interaction with and ubiquitination by Crumbs complex-bound WWP1. Ubiquitinated AMOTL2 then interacts with LATS2 which in turn phosphorylates YAP1, excluding it from the nucleus and localizing it to the cytoplasm and tight junctions, therefore ultimately repressing YAP1-driven transcription of target genes. Acts to inhibit WWTR1/TAZ transcriptional coactivator activity via sequestering WWTR1/TAZ in the cytoplasm and at tight junctions. Regulates the size and protein composition of the podosome cortex and core at myofibril neuromuscular junctions. Selectively promotes FGF-induced MAPK activation through SRC. May play a role in the polarity, proliferation and migration of endothelial cells. The polypeptide is Angiomotin-like protein 2 (Canis lupus familiaris (Dog)).